Here is a 221-residue protein sequence, read N- to C-terminus: Imidazoleglycerol-phosphate dehydratase (221 aa).

This sequence belongs to the imidazoleglycerol-phosphate dehydratase family.

It catalyses the reaction D-erythro-1-(imidazol-4-yl)glycerol 3-phosphate = 3-(imidazol-4-yl)-2-oxopropyl phosphate + H2O. It functions in the pathway amino-acid biosynthesis; L-histidine biosynthesis; L-histidine from 5-phospho-alpha-D-ribose 1-diphosphate: step 6/9. The protein is Imidazoleglycerol-phosphate dehydratase (HIS3) of Kluyveromyces lactis (strain ATCC 8585 / CBS 2359 / DSM 70799 / NBRC 1267 / NRRL Y-1140 / WM37) (Yeast).